The primary structure comprises 275 residues: Myoblast determination protein 1 homolog (275 aa).

The 52-residue stretch at 84-135 folds into the bHLH domain; the sequence is DRRKAATMRERRRLSKVNDAFETLKRCTSTNPNQRLPKVEILRNAISYIESL. Residues 234–275 form a disordered region; sequence EGHEESPCSPHEGSVLSDTGTTAPSPTSCPQQQAQETIYQVL. Residues 249 to 275 are compositionally biased toward polar residues; sequence LSDTGTTAPSPTSCPQQQAQETIYQVL.

As to quaternary structure, efficient DNA binding requires dimerization with another bHLH protein. As to expression, from mid-gastrula to just before somite formation, expressed in cells adjacent to axial mesoderm. Subsequently, during the anterior-to-posterior wave of somite formation and maturation, expressed within particular regions of each somite. Expressed in both muscle and non-muscle cells.

The protein localises to the nucleus. In terms of biological role, may act as a transcriptional activator that promotes transcription of muscle-specific target genes and plays a role in muscle differentiation. This chain is Myoblast determination protein 1 homolog (myod1), found in Danio rerio (Zebrafish).